The primary structure comprises 749 residues: NAD(P)H-quinone oxidoreductase subunit 5, chloroplastic (749 aa).

Helical transmembrane passes span 9 to 29 (WIIP…LLLF), 40 to 60 (WAFQ…NLSI), 89 to 109 (IDPL…MVLI), 125 to 145 (FAYM…SNLI), 147 to 167 (IYIF…FWFT), 185 to 205 (GDFG…SFEF), 219 to 239 (NEVN…GAVA), 258 to 278 (TPIS…FLVA), 290 to 312 (IMNF…ALAQ), 327 to 347 (LGYM…FHLI), 354 to 374 (ALLF…VGYC), 396 to 416 (TSFL…CFWS), 425 to 445 (WLYS…TAFY), 549 to 569 (LFPI…GIPF), 608 to 628 (VFSV…YKPV), 694 to 714 (IIDG…EVIK), and 725 to 745 (LFFY…LNVF).

Belongs to the complex I subunit 5 family. As to quaternary structure, NDH is composed of at least 16 different subunits, 5 of which are encoded in the nucleus.

The protein localises to the plastid. The protein resides in the chloroplast thylakoid membrane. The catalysed reaction is a plastoquinone + NADH + (n+1) H(+)(in) = a plastoquinol + NAD(+) + n H(+)(out). The enzyme catalyses a plastoquinone + NADPH + (n+1) H(+)(in) = a plastoquinol + NADP(+) + n H(+)(out). Its function is as follows. NDH shuttles electrons from NAD(P)H:plastoquinone, via FMN and iron-sulfur (Fe-S) centers, to quinones in the photosynthetic chain and possibly in a chloroplast respiratory chain. The immediate electron acceptor for the enzyme in this species is believed to be plastoquinone. Couples the redox reaction to proton translocation, and thus conserves the redox energy in a proton gradient. The polypeptide is NAD(P)H-quinone oxidoreductase subunit 5, chloroplastic (ndhF) (Atractylodes lancea (Atractylodes japonica)).